The chain runs to 428 residues: D-inositol 3-phosphate glycosyltransferase (428 aa).

Position 17 (His17) interacts with 1D-myo-inositol 3-phosphate. Residues 23 to 24 (QP) and Gly31 contribute to the UDP-N-acetyl-alpha-D-glucosamine site. Residues 28–33 (DAGGMN), Arg86, Tyr119, Thr143, and Arg163 contribute to the 1D-myo-inositol 3-phosphate site. 2 residues coordinate UDP-N-acetyl-alpha-D-glucosamine: Arg237 and Lys242. Residues Tyr312, Arg313, and Ala315 each coordinate Mg(2+). UDP-N-acetyl-alpha-D-glucosamine contacts are provided by Glu325 and Glu333. Residue Thr339 participates in Mg(2+) binding.

It belongs to the glycosyltransferase group 1 family. MshA subfamily. In terms of assembly, homodimer.

The enzyme catalyses 1D-myo-inositol 3-phosphate + UDP-N-acetyl-alpha-D-glucosamine = 1D-myo-inositol 2-acetamido-2-deoxy-alpha-D-glucopyranoside 3-phosphate + UDP + H(+). Its function is as follows. Catalyzes the transfer of a N-acetyl-glucosamine moiety to 1D-myo-inositol 3-phosphate to produce 1D-myo-inositol 2-acetamido-2-deoxy-glucopyranoside 3-phosphate in the mycothiol biosynthesis pathway. The sequence is that of D-inositol 3-phosphate glycosyltransferase from Thermobispora bispora (strain ATCC 19993 / DSM 43833 / CBS 139.67 / JCM 10125 / KCTC 9307 / NBRC 14880 / R51).